The primary structure comprises 747 residues: Sex-specific storage-protein 1 (747 aa).

The N-terminal stretch at 1-15 is a signal peptide; it reads MRVLVLLACLAAASA. Residues N494 and N706 are each glycosylated (N-linked (GlcNAc...) asparagine).

It belongs to the hemocyanin family. Fat body.

It localises to the secreted. The protein resides in the extracellular space. Its function is as follows. Larval storage protein (LSP) which may serve as a store of amino acids for synthesis of adult proteins. This chain is Sex-specific storage-protein 1 (SP1), found in Bombyx mori (Silk moth).